The primary structure comprises 130 residues: Small ribosomal subunit protein uS8 (130 aa).

Belongs to the universal ribosomal protein uS8 family. Part of the 30S ribosomal subunit. Contacts proteins S5 and S12.

One of the primary rRNA binding proteins, it binds directly to 16S rRNA central domain where it helps coordinate assembly of the platform of the 30S subunit. In Neisseria meningitidis serogroup C (strain 053442), this protein is Small ribosomal subunit protein uS8.